Consider the following 251-residue polypeptide: Probable transcriptional regulatory protein AAur_2300 (251 aa).

Belongs to the TACO1 family.

It localises to the cytoplasm. The chain is Probable transcriptional regulatory protein AAur_2300 from Paenarthrobacter aurescens (strain TC1).